The following is a 385-amino-acid chain: UPF0744 protein YSC83 (385 aa).

The protein belongs to the UPF0744 family.

The protein localises to the mitochondrion outer membrane. The chain is UPF0744 protein YSC83 (YSC83) from Saccharomyces cerevisiae (strain ATCC 204508 / S288c) (Baker's yeast).